The sequence spans 293 residues: MDQVVYHTDFPGLNLLKRGKVRDVYDFGDRLLIVATDRLSAFDVVMPDPIPGKGEILTQISLFWFDQVKDIVRNHLISSDVNDYPEACRPYAETLAGRSMLVTKTEPLAIECVVRGYLSGSGWKSYQKDRTVCGISLPDGLRESDRLPEPIFTPSTKAEAGQHDINISFDEAANIAGRETTEKARDLSLAIYRRGVEVADARGIIIADTKFEFGFVDGELILIDEVLTPDSSRFWPRDGYAPGGPQQSFDKQYVRDYLLSLNWNQKPPAPDLPPDVVANTRKKYSEALDLLVG.

It belongs to the SAICAR synthetase family.

The enzyme catalyses 5-amino-1-(5-phospho-D-ribosyl)imidazole-4-carboxylate + L-aspartate + ATP = (2S)-2-[5-amino-1-(5-phospho-beta-D-ribosyl)imidazole-4-carboxamido]succinate + ADP + phosphate + 2 H(+). Its pathway is purine metabolism; IMP biosynthesis via de novo pathway; 5-amino-1-(5-phospho-D-ribosyl)imidazole-4-carboxamide from 5-amino-1-(5-phospho-D-ribosyl)imidazole-4-carboxylate: step 1/2. This Desulfosudis oleivorans (strain DSM 6200 / JCM 39069 / Hxd3) (Desulfococcus oleovorans) protein is Phosphoribosylaminoimidazole-succinocarboxamide synthase.